The sequence spans 241 residues: Probable transcriptional regulatory protein lmo1535 (241 aa).

Positions 1–14 are enriched in polar residues; that stretch reads MSGHSKWNNIQGRK. A disordered region spans residues 1-22; the sequence is MSGHSKWNNIQGRKNAQDSKRS.

The protein belongs to the TACO1 family.

It is found in the cytoplasm. In Listeria monocytogenes serovar 1/2a (strain ATCC BAA-679 / EGD-e), this protein is Probable transcriptional regulatory protein lmo1535.